The chain runs to 170 residues: MSEENQVNAADTQATQQPVLQIQRIYVKDVSFEAPNLPHIFQQDWEPKLSFDLSTEAKQVGDDLYEVCLNISVETTMESSGDVAFICEVKQAGVFTISGLEEMQMAHCLTSQCPNMLFPYARELVSSLVNRGTFPALNLSPVNFDALFMDYLQRQEQAEQTTEEENKDVH.

This sequence belongs to the SecB family. Homotetramer, a dimer of dimers. One homotetramer interacts with 1 SecA dimer.

The protein localises to the cytoplasm. Its function is as follows. One of the proteins required for the normal export of preproteins out of the cell cytoplasm. It is a molecular chaperone that binds to a subset of precursor proteins, maintaining them in a translocation-competent state. It also specifically binds to its receptor SecA. In Pasteurella multocida (strain Pm70), this protein is Protein-export protein SecB.